A 341-amino-acid chain; its full sequence is Anthranilate phosphoribosyltransferase (341 aa).

Residues Gly79, 82 to 83, Thr87, 89 to 92, 107 to 115, and Ser119 contribute to the 5-phospho-alpha-D-ribose 1-diphosphate site; these read GD, NIST, and KHGNRAVSS. Gly79 is an anthranilate binding site. Ser91 contributes to the Mg(2+) binding site. Residue Asn110 coordinates anthranilate. Residue Arg165 participates in anthranilate binding. Mg(2+) is bound by residues Asp224 and Glu225.

The protein belongs to the anthranilate phosphoribosyltransferase family. As to quaternary structure, homodimer. Mg(2+) serves as cofactor.

It catalyses the reaction N-(5-phospho-beta-D-ribosyl)anthranilate + diphosphate = 5-phospho-alpha-D-ribose 1-diphosphate + anthranilate. The protein operates within amino-acid biosynthesis; L-tryptophan biosynthesis; L-tryptophan from chorismate: step 2/5. Its function is as follows. Catalyzes the transfer of the phosphoribosyl group of 5-phosphorylribose-1-pyrophosphate (PRPP) to anthranilate to yield N-(5'-phosphoribosyl)-anthranilate (PRA). The sequence is that of Anthranilate phosphoribosyltransferase from Bacillus mycoides (strain KBAB4) (Bacillus weihenstephanensis).